We begin with the raw amino-acid sequence, 188 residues long: Large ribosomal subunit protein eL18 (188 aa).

K119 is covalently cross-linked (Glycyl lysine isopeptide (Lys-Gly) (interchain with G-Cter in SUMO2)). At S130 the chain carries Phosphoserine. A disordered region spans residues 150–188; that stretch reads RHFGKAPGTPHSHTKPYVRSKGRKFERARGRRASRGYKN. A Phosphothreonine modification is found at T158. Composition is skewed to basic residues over residues 161-171 and 178-188; these read SHTKPYVRSKG and RGRRASRGYKN. K164 participates in a covalent cross-link: Glycyl lysine isopeptide (Lys-Gly) (interchain with G-Cter in SUMO2).

It belongs to the eukaryotic ribosomal protein eL18 family. As to quaternary structure, component of the large ribosomal subunit.

The protein localises to the cytoplasm. The protein resides in the cytosol. It is found in the rough endoplasmic reticulum. Its function is as follows. Component of the large ribosomal subunit. The ribosome is a large ribonucleoprotein complex responsible for the synthesis of proteins in the cell. This is Large ribosomal subunit protein eL18 (RPL18) from Bos taurus (Bovine).